We begin with the raw amino-acid sequence, 535 residues long: Methylmalonate-semialdehyde/malonate-semialdehyde dehydrogenase [acylating], mitochondrial (535 aa).

A mitochondrion-targeting transit peptide spans 1–32 (MAAAVAAAAAMRSRILQVSSKVNATWYPASSF). Lys-47, Lys-52, Lys-55, and Lys-76 each carry N6-acetyllysine; alternate. An N6-succinyllysine; alternate mark is found at Lys-47, Lys-52, Lys-55, and Lys-76. Position 87 is an N6-acetyllysine (Lys-87). An N6-acetyllysine; alternate mark is found at Lys-117 and Lys-129. N6-succinyllysine; alternate is present on residues Lys-117 and Lys-129. NAD(+) contacts are provided by Ala-183, Phe-185, Lys-209, Glu-212, Arg-213, and Ser-262. Ser-262 is modified (phosphoserine). The residue at position 298 (Lys-298) is an N6-acetyllysine. Cys-317 (nucleophile) is an active-site residue. N6-acetyllysine is present on residues Lys-330 and Lys-331. Lys-364 and Lys-376 each carry N6-acetyllysine; alternate. 2 positions are modified to N6-succinyllysine; alternate: Lys-364 and Lys-376. Ser-380 is modified (phosphoserine). Lys-391 carries the post-translational modification N6-succinyllysine. Glu-417 serves as a coordination point for NAD(+). The residue at position 500 (Lys-500) is an N6-acetyllysine. Position 517 is an N6-succinyllysine (Lys-517).

It belongs to the aldehyde dehydrogenase family. In terms of assembly, homotetramer. In terms of processing, acetylation of Lys-55; Lys-117 and Lys-331 is observed in liver mitochondria from fasted mice but not from fed mice.

Its subcellular location is the mitochondrion. It carries out the reaction 3-oxopropanoate + NAD(+) + CoA + H2O = hydrogencarbonate + acetyl-CoA + NADH + H(+). It catalyses the reaction 2-methyl-3-oxopropanoate + NAD(+) + CoA + H2O = propanoyl-CoA + hydrogencarbonate + NADH + H(+). The catalysed reaction is (R)-2-methyl-3-oxopropanoate + NAD(+) + CoA + H2O = propanoyl-CoA + hydrogencarbonate + NADH + H(+). The enzyme catalyses (S)-2-methyl-3-oxopropanoate + NAD(+) + CoA + H2O = propanoyl-CoA + hydrogencarbonate + NADH + H(+). In terms of biological role, malonate and methylmalonate semialdehyde dehydrogenase involved in the catabolism of valine, thymine, and compounds catabolized by way of beta-alanine, including uracil and cytidine. The chain is Methylmalonate-semialdehyde/malonate-semialdehyde dehydrogenase [acylating], mitochondrial from Mus musculus (Mouse).